The following is a 59-amino-acid chain: Large ribosomal subunit protein bL32 (59 aa).

Over residues 1–16 the composition is skewed to basic residues; it reads MAVPKRKTSPSKRGMR. Residues 1–20 are disordered; it reads MAVPKRKTSPSKRGMRRSHD.

Belongs to the bacterial ribosomal protein bL32 family.

The polypeptide is Large ribosomal subunit protein bL32 (Sphingopyxis alaskensis (strain DSM 13593 / LMG 18877 / RB2256) (Sphingomonas alaskensis)).